The following is a 1088-amino-acid chain: DEAD-box ATP-dependent RNA helicase 40 (1088 aa).

3 disordered regions span residues Met-1–Gly-28, Thr-47–His-178, and Thr-192–His-254. An N-acetylalanine modification is found at Ala-2. The WW domain maps to Pro-20 to Ala-54. 3 stretches are compositionally biased toward low complexity: residues Val-87 to Met-137, Gln-148 to Gln-171, and Gln-200 to Gln-215. A compositionally biased stretch (basic and acidic residues) spans Pro-222–Gly-231. Polar residues predominate over residues Gly-236–His-254. Positions Ile-435 to Ala-463 match the Q motif motif. The Helicase ATP-binding domain occupies Trp-466–Val-640. Ala-479 to Thr-486 contributes to the ATP binding site. Residues Asp-588–Asp-591 carry the DEAD box motif. One can recognise a Helicase C-terminal domain in the interval Arg-669–Ala-813. Composition is skewed to gly residues over residues Glu-861–Phe-885, Gly-893–Phe-902, Asn-911–Arg-920, and Phe-932–Val-944. The segment at Glu-861–Gly-1033 is disordered. Residues Gly-945–Arg-963 are compositionally biased toward basic and acidic residues. Residues Ser-969 to Arg-983 are compositionally biased toward low complexity. The span at Ser-984–Ser-1013 shows a compositional bias: basic residues.

It belongs to the DEAD box helicase family. DDX5/DBP2 subfamily.

It is found in the nucleus. It catalyses the reaction ATP + H2O = ADP + phosphate + H(+). Its function is as follows. ATP-dependent RNA helicase involved nonsense-mediated mRNA decay and ribosome biogenesis through rRNA processing. The protein is DEAD-box ATP-dependent RNA helicase 40 (RH40) of Arabidopsis thaliana (Mouse-ear cress).